Consider the following 400-residue polypeptide: Chalcone synthase WHP1 (400 aa).

Residue cysteine 167 is part of the active site.

It belongs to the thiolase-like superfamily. Chalcone/stilbene synthases family.

The enzyme catalyses (E)-4-coumaroyl-CoA + 3 malonyl-CoA + 3 H(+) = 2',4,4',6'-tetrahydroxychalcone + 3 CO2 + 4 CoA. It functions in the pathway secondary metabolite biosynthesis; flavonoid biosynthesis. The primary product of this enzyme is 4,2',4',6'-tetrahydroxychalcone (also termed naringenin-chalcone or chalcone) which can under specific conditions spontaneously isomerize into naringenin. The chain is Chalcone synthase WHP1 (WHP1) from Zea mays (Maize).